Consider the following 122-residue polypeptide: Large ribosomal subunit protein uL14 (122 aa).

This sequence belongs to the universal ribosomal protein uL14 family. As to quaternary structure, part of the 50S ribosomal subunit. Forms a cluster with proteins L3 and L19. In the 70S ribosome, L14 and L19 interact and together make contacts with the 16S rRNA in bridges B5 and B8.

In terms of biological role, binds to 23S rRNA. Forms part of two intersubunit bridges in the 70S ribosome. This is Large ribosomal subunit protein uL14 from Cereibacter sphaeroides (strain ATCC 17029 / ATH 2.4.9) (Rhodobacter sphaeroides).